Consider the following 285-residue polypeptide: Putative sugar uptake protein lmo0169 (285 aa).

10 consecutive transmembrane segments (helical) span residues 5-24, 31-48, 53-71, 84-106, 116-135, 151-173, 178-195, 207-226, 232-254, and 263-282; these read IALI…SKIG, IIGT…VFIF, YTAT…WSLG, VSKT…GVFA, LVLG…LTSY, IITL…WFDI, AILP…LFSI, WLNM…LLFS, IATG…ILFL, and LILV…MIGI.

Belongs to the GRP transporter (TC 2.A.7.5) family.

Its subcellular location is the cell membrane. The sequence is that of Putative sugar uptake protein lmo0169 from Listeria monocytogenes serovar 1/2a (strain ATCC BAA-679 / EGD-e).